Here is a 323-residue protein sequence, read N- to C-terminus: Zinc finger C2HC domain-containing protein 1A (323 aa).

Residues 7-36 form a C2HC/C3H-type 1 zinc finger; sequence ELRPCKICGRTFFPATLKKHVPICQKTSVK. Residues Cys11, Cys14, His26, and Cys30 each contribute to the Zn(2+) site. Residues 35-75 form a disordered region; it reads VKKRKTFESSRQRAEGTDINTVKPVKPRPEPPKKQSNWKRK. Residues 40 to 50 show a composition bias toward basic and acidic residues; it reads TFESSRQRAEG. Residues 110 to 139 form a C2HC/C3H-type 2 zinc finger; that stretch reads DYVQCPYCQRRFNQNAADRHINFCKEQSAR. Zn(2+) contacts are provided by Cys114, Cys117, His129, and Cys133. The segment at 138–273 is disordered; the sequence is ARMGQKIKGG…EAAMGYDSSD (136 aa). The span at 208 to 226 shows a compositional bias: polar residues; that stretch reads KYQTQSPAHKNSTMVTSPQ.

It belongs to the ZC2HC1 family. It depends on Zn(2+) as a cofactor.

The protein is Zinc finger C2HC domain-containing protein 1A (zc2hc1a) of Xenopus laevis (African clawed frog).